A 611-amino-acid polypeptide reads, in one-letter code: Developmental and secondary metabolism regulator veA (611 aa).

3 disordered regions span residues 1-57 (MNRK…RPVD), 222-497 (RRRE…ASFD), and 511-611 (LEAS…PGHA). Over residues 14–23 (KSSATRTTND) the composition is skewed to polar residues. The region spanning 24–216 (GRAITYEMQV…AEQGCRVRIR (193 aa)) is the Velvet domain. The short motif at 38-43 (QRARAC) is the Nuclear localization signal element. Over residues 242 to 254 (AARARASATPDPS) the composition is skewed to low complexity. A compositionally biased stretch (polar residues) spans 274 to 290 (SASNASHQSLGSISRRP). Low complexity predominate over residues 330–340 (YPPNQFVQQQP). A compositionally biased stretch (pro residues) spans 341 to 361 (PMQPPLPQYQPPNYPAPPPPV). A compositionally biased stretch (low complexity) spans 362–377 (TAAQQPQPAQSYYNYP). Positions 419-434 (RNSQQIPPTSQPTAYT) are enriched in polar residues. 2 stretches are compositionally biased toward low complexity: residues 435–452 (QPMQ…QHYQ) and 461–471 (QASQHSSYSSM). Residues 455–499 (PPPPPSQASQHSSYSSMDLYNSRPAPIEPHHHGNTPASKASFDLP) are PEST. The span at 511 to 533 (LEASSPTSVAPTNAYFSGGQTPI) shows a compositional bias: polar residues.

This sequence belongs to the velvet family. VeA subfamily. In terms of assembly, component of the heterotrimeric velvet complex composed of laeA, veA and velB; VeA acting as a bridging protein between laeA and velB.

Its subcellular location is the nucleus. The protein resides in the cytoplasm. Component of the velvet transcription factor complex that controls sexual/asexual developmental ratio in response to light, promoting sexual development in the darkness while stimulating asexual sporulation under illumination. The velvet complex hat acts as a global regulator for secondary metabolite gene expression. Controls the expression of the dothistromin gene cluster. Regulates hyphal growth and pigment formation. Acts as a positive regulator of virulence. In Dothistroma septosporum (strain NZE10 / CBS 128990) (Red band needle blight fungus), this protein is Developmental and secondary metabolism regulator veA.